Consider the following 308-residue polypeptide: Elongation factor Ts (308 aa).

Residues 80–83 (TDFV) form an involved in Mg(2+) ion dislocation from EF-Tu region.

The protein belongs to the EF-Ts family.

Its subcellular location is the cytoplasm. Its function is as follows. Associates with the EF-Tu.GDP complex and induces the exchange of GDP to GTP. It remains bound to the aminoacyl-tRNA.EF-Tu.GTP complex up to the GTP hydrolysis stage on the ribosome. This is Elongation factor Ts from Rhizobium johnstonii (strain DSM 114642 / LMG 32736 / 3841) (Rhizobium leguminosarum bv. viciae).